Consider the following 406-residue polypeptide: Cysteine desulfurase (406 aa).

Residue Lys226 is modified to N6-(pyridoxal phosphate)lysine. Catalysis depends on Cys364, which acts as the Cysteine persulfide intermediate.

It belongs to the class-V pyridoxal-phosphate-dependent aminotransferase family. Csd subfamily. As to quaternary structure, homodimer. Interacts with SufE and the SufBCD complex composed of SufB, SufC and SufD. The interaction with SufE is required to mediate the direct transfer of the sulfur atom from the S-sulfanylcysteine. Pyridoxal 5'-phosphate is required as a cofactor.

The protein resides in the cytoplasm. The catalysed reaction is (sulfur carrier)-H + L-cysteine = (sulfur carrier)-SH + L-alanine. It carries out the reaction L-selenocysteine + AH2 = hydrogenselenide + L-alanine + A + H(+). The protein operates within cofactor biosynthesis; iron-sulfur cluster biosynthesis. Functionally, cysteine desulfurases mobilize the sulfur from L-cysteine to yield L-alanine, an essential step in sulfur metabolism for biosynthesis of a variety of sulfur-containing biomolecules. Component of the suf operon, which is activated and required under specific conditions such as oxidative stress and iron limitation. Acts as a potent selenocysteine lyase in vitro, that mobilizes selenium from L-selenocysteine. Selenocysteine lyase activity is however unsure in vivo. This is Cysteine desulfurase from Klebsiella pneumoniae subsp. pneumoniae (strain ATCC 700721 / MGH 78578).